Reading from the N-terminus, the 438-residue chain is Xylose isomerase (438 aa).

Catalysis depends on residues histidine 103 and aspartate 106. Mg(2+) is bound by residues glutamate 234, glutamate 270, histidine 273, aspartate 298, aspartate 309, aspartate 311, and aspartate 341.

This sequence belongs to the xylose isomerase family. In terms of assembly, homotetramer. Mg(2+) serves as cofactor.

It is found in the cytoplasm. It catalyses the reaction alpha-D-xylose = alpha-D-xylulofuranose. The protein is Xylose isomerase of Bacteroides thetaiotaomicron (strain ATCC 29148 / DSM 2079 / JCM 5827 / CCUG 10774 / NCTC 10582 / VPI-5482 / E50).